A 351-amino-acid polypeptide reads, in one-letter code: L-threonine 3-dehydrogenase (351 aa).

A Zn(2+)-binding site is contributed by C39. Catalysis depends on charge relay system residues T41 and H44. Zn(2+) contacts are provided by H64, E65, C94, C97, C100, and C108. Residues I176, D196, R201, 271–273, and 295–296 contribute to the NAD(+) site; these read LGI and IY.

It belongs to the zinc-containing alcohol dehydrogenase family. Homotetramer. It depends on Zn(2+) as a cofactor.

It is found in the cytoplasm. The catalysed reaction is L-threonine + NAD(+) = (2S)-2-amino-3-oxobutanoate + NADH + H(+). It participates in amino-acid degradation; L-threonine degradation via oxydo-reductase pathway; glycine from L-threonine: step 1/2. Functionally, catalyzes the NAD(+)-dependent oxidation of L-threonine to 2-amino-3-ketobutyrate. This chain is L-threonine 3-dehydrogenase, found in Francisella philomiragia subsp. philomiragia (strain ATCC 25017 / CCUG 19701 / FSC 153 / O#319-036).